Reading from the N-terminus, the 341-residue chain is Anthranilate phosphoribosyltransferase (341 aa).

Residues glycine 79, 82–83 (GD), threonine 87, 89–92 (NIST), 107–115 (KHGNRAASS), and alanine 119 each bind 5-phospho-alpha-D-ribose 1-diphosphate. Anthranilate is bound at residue glycine 79. Serine 91 is a binding site for Mg(2+). Asparagine 110 contributes to the anthranilate binding site. Arginine 165 serves as a coordination point for anthranilate. Residues aspartate 224 and glutamate 225 each coordinate Mg(2+).

The protein belongs to the anthranilate phosphoribosyltransferase family. As to quaternary structure, homodimer. The cofactor is Mg(2+).

It carries out the reaction N-(5-phospho-beta-D-ribosyl)anthranilate + diphosphate = 5-phospho-alpha-D-ribose 1-diphosphate + anthranilate. It functions in the pathway amino-acid biosynthesis; L-tryptophan biosynthesis; L-tryptophan from chorismate: step 2/5. Catalyzes the transfer of the phosphoribosyl group of 5-phosphorylribose-1-pyrophosphate (PRPP) to anthranilate to yield N-(5'-phosphoribosyl)-anthranilate (PRA). The sequence is that of Anthranilate phosphoribosyltransferase from Lacticaseibacillus paracasei (strain ATCC 334 / BCRC 17002 / CCUG 31169 / CIP 107868 / KCTC 3260 / NRRL B-441) (Lactobacillus paracasei).